The chain runs to 444 residues: Tubulin beta chain (444 aa).

The GTP site is built by Q11, E69, S138, G142, T143, G144, N204, and N226. E69 contacts Mg(2+).

It belongs to the tubulin family. Dimer of alpha and beta chains. A typical microtubule is a hollow water-filled tube with an outer diameter of 25 nm and an inner diameter of 15 nM. Alpha-beta heterodimers associate head-to-tail to form protofilaments running lengthwise along the microtubule wall with the beta-tubulin subunit facing the microtubule plus end conferring a structural polarity. Microtubules usually have 13 protofilaments but different protofilament numbers can be found in some organisms and specialized cells. The cofactor is Mg(2+).

The protein resides in the cytoplasm. It localises to the cytoskeleton. Its function is as follows. Tubulin is the major constituent of microtubules, a cylinder consisting of laterally associated linear protofilaments composed of alpha- and beta-tubulin heterodimers. Microtubules grow by the addition of GTP-tubulin dimers to the microtubule end, where a stabilizing cap forms. Below the cap, tubulin dimers are in GDP-bound state, owing to GTPase activity of alpha-tubulin. This is Tubulin beta chain (TBB) from Onchocerca gibsoni.